The primary structure comprises 375 residues: 2-heptyl-3-hydroxy-4(1H)-quinolone synthase (375 aa).

The protein belongs to the 3-hydroxybenzoate 6-hydroxylase family.

The enzyme catalyses 2-heptyl-4(1H)-quinolone + NADH + O2 + H(+) = 2-heptyl-3-hydroxy-4(1H)-quinolone + NAD(+) + H2O. Involved in the degradation pathway of the Pseudomonas aeruginosa quorum sensing signal molecule HHQ (2-heptyl-4(1H)-quinolone) to anthranilate. Catalyzes the hydroxylation of HHQ to PQS (2-heptyl-3-hydroxy-4(1H)-quinolone). This is 2-heptyl-3-hydroxy-4(1H)-quinolone synthase from Mycobacteroides abscessus (strain ATCC 19977 / DSM 44196 / CCUG 20993 / CIP 104536 / JCM 13569 / NCTC 13031 / TMC 1543 / L948) (Mycobacterium abscessus).